Here is a 107-residue protein sequence, read N- to C-terminus: MSVAAAVTDATFKQEVLESSIPVLVDFWAPWCGPCRMVAPVVDEIAQQYSDQVKVVKVNTDENPSVASQYGIRSIPTLMIFKDGQRVDTVVGAVPKTTLANTLDKHL.

The 106-residue stretch at 2 to 107 (SVAAAVTDAT…TLANTLDKHL (106 aa)) folds into the Thioredoxin domain. The cysteines at positions 32 and 35 are disulfide-linked.

Belongs to the thioredoxin family.

Its function is as follows. Participates in various redox reactions through the reversible oxidation of its active center dithiol to a disulfide and catalyzes dithiol-disulfide exchange reactions. The polypeptide is Thioredoxin 1 (trxA) (Synechococcus elongatus (strain ATCC 33912 / PCC 7942 / FACHB-805) (Anacystis nidulans R2)).